The chain runs to 82 residues: UPF0153 protein VC_1057 (82 aa).

It belongs to the UPF0153 family.

This chain is UPF0153 protein VC_1057, found in Vibrio cholerae serotype O1 (strain ATCC 39315 / El Tor Inaba N16961).